The chain runs to 217 residues: Frataxin, mitochondrial (217 aa).

Residues 1-42 (MWTLGRRSVASFLPRSALPGFAPTRAGAPRPAKDLSLSGLPG) constitute a mitochondrion transit peptide.

The protein belongs to the frataxin family. As to quaternary structure, component of the mitochondrial core iron-sulfur cluster (ISC) complex composed of NFS1, LYRM4, NDUFAB1, ISCU, FXN, and FDX2; this complex is a heterohexamer containing two copies of each monomer. Homodimer. Monomer (probable predominant form). Oligomer. Monomers and polymeric aggregates of &gt;1 MDa have been isolated from mitochondria. A small fraction of heterologous overexpressed recombinant frataxin forms high-molecular weight aggregates that incorporate iron. Interacts with LYRM4. Interacts (via ferrous form) with ISCU; the interaction is possible when both are bound to the dimeric form of the cysteine desulfurase complex (NFS1:LYRM4) and the interaction enhances FXN interaction to the dimeric form of the cysteine desulfurase complex (NFS1:LYRM4). Interacts with FECH; one iron-bound FXN monomer seems to interact with a FECH homodimer. Interacts with SDHA and SDHB. Interacts with ACO2; the interaction is dependent on citrate. Interacts with HSPA9. Interacts with ACO1. Interacts with ISCU (cytoplasmic form). Processed in two steps by mitochondrial processing peptidase (MPP). MPP first cleaves the precursor to intermediate form and subsequently converts the intermediate to yield frataxin mature form (frataxin(81-210)) which is the predominant form. The additional forms, frataxin(56-210) and frataxin(78-210), seem to be produced when the normal maturation process is impaired; their physiological relevance is unsure.

The protein resides in the mitochondrion. The protein localises to the cytoplasm. It localises to the cytosol. It carries out the reaction 4 Fe(2+) + O2 + 4 H(+) = 4 Fe(3+) + 2 H2O. Its function is as follows. Functions as an activator of persulfide transfer to the scaffoding protein ISCU as component of the core iron-sulfur cluster (ISC) assembly complex and participates to the [2Fe-2S] cluster assembly. Accelerates sulfur transfer from NFS1 persulfide intermediate to ISCU and to small thiols such as L-cysteine and glutathione leading to persulfuration of these thiols and ultimately sulfide release. Binds ferrous ion and is released from FXN upon the addition of both L-cysteine and reduced FDX2 during [2Fe-2S] cluster assembly. The core iron-sulfur cluster (ISC) assembly complex is involved in the de novo synthesis of a [2Fe-2S] cluster, the first step of the mitochondrial iron-sulfur protein biogenesis. This process is initiated by the cysteine desulfurase complex (NFS1:LYRM4:NDUFAB1) that produces persulfide which is delivered on the scaffold protein ISCU in a FXN-dependent manner. Then this complex is stabilized by FDX2 which provides reducing equivalents to accomplish the [2Fe-2S] cluster assembly. Finally, the [2Fe-2S] cluster is transferred from ISCU to chaperone proteins, including HSCB, HSPA9 and GLRX5. May play a role in the protection against iron-catalyzed oxidative stress through its ability to catalyze the oxidation of Fe(2+) to Fe(3+); the oligomeric form but not the monomeric form has in vitro ferroxidase activity. May be able to store large amounts of iron in the form of a ferrihydrite mineral by oligomerization; however, the physiological relevance is unsure as reports are conflicting and the function has only been shown using heterologous overexpression systems. May function as an iron chaperone protein that protects the aconitase [4Fe-4S]2+ cluster from disassembly and promotes enzyme reactivation. May play a role as a high affinity iron binding partner for FECH that is capable of both delivering iron to ferrochelatase and mediating the terminal step in mitochondrial heme biosynthesis. Functionally, modulates the RNA-binding activity of ACO1. May be involved in the cytoplasmic iron-sulfur protein biogenesis. May contribute to oxidative stress resistance and overall cell survival. The polypeptide is Frataxin, mitochondrial (Bos taurus (Bovine)).